Reading from the N-terminus, the 357-residue chain is BLOC-1-related complex subunit 6 (357 aa).

A disordered region spans residues H20–T196. The segment covering G90–G99 has biased composition (low complexity). The span at E138–A149 shows a compositional bias: acidic residues. A compositionally biased stretch (low complexity) spans A150 to R162. Residue S168 is modified to Phosphoserine. The residue at position 196 (T196) is a Phosphothreonine. Phosphoserine is present on S199. Residues L227 to I256 are disordered. The span at A230–I256 shows a compositional bias: pro residues.

The protein belongs to the BORCS6 family. In terms of assembly, component of the BLOC-one-related complex (BORC) which is composed of BLOC1S1, BLOC1S2, BORCS5, BORCS6, BORCS7, BORCS8, KXD1 and SNAPIN.

It is found in the lysosome membrane. As part of the BORC complex may play a role in lysosomes movement and localization at the cell periphery. Associated with the cytosolic face of lysosomes, the BORC complex may recruit ARL8B and couple lysosomes to microtubule plus-end-directed kinesin motor. This Homo sapiens (Human) protein is BLOC-1-related complex subunit 6.